The chain runs to 416 residues: Phosphoglycerate kinase (416 aa).

(2R)-3-phosphoglycerate is bound by residues Val23, Asp24, Phe25, Asn26, Asn38, Arg39, Ser62, His63, Gly65, Arg66, Leu121, Arg122, His169, and Arg170. Gly213 provides a ligand contact to ADP. Gly213 lines the CDP pocket. Residues Ala214 and Lys215 each coordinate AMP. The ATP site is built by Ala214 and Lys215. Ala214 contacts Mg(2+). Asp218 serves as a coordination point for CDP. Residue Asp218 coordinates Mg(2+). An AMP-binding site is contributed by Lys219. An ATP-binding site is contributed by Lys219. ADP is bound at residue Gly237. Residue Gly237 participates in CDP binding. Residues Gly238 and Gly312 each contribute to the AMP site. ATP-binding residues include Gly238 and Gly312. The CDP site is built by Gly337 and Phe342. Phe342 is an ADP binding site. Glu343 is an AMP binding site. A Mg(2+)-binding site is contributed by Asp374. Position 375 (Thr375) interacts with ATP.

This sequence belongs to the phosphoglycerate kinase family. In terms of assembly, monomer. Mg(2+) is required as a cofactor.

It carries out the reaction (2R)-3-phosphoglycerate + ATP = (2R)-3-phospho-glyceroyl phosphate + ADP. It participates in carbohydrate degradation; glycolysis; pyruvate from D-glyceraldehyde 3-phosphate: step 2/5. The chain is Phosphoglycerate kinase (PGK) from Plasmodium falciparum (isolate 3D7).